A 99-amino-acid polypeptide reads, in one-letter code: Complement inhibitor RaCI7 (99 aa).

The first 24 residues, 1-24, serve as a signal peptide directing secretion; that stretch reads MAALNGLVLLLLTISAMFISECYS. Cystine bridges form between C37-C61, C42-C63, and C57-C78.

This sequence belongs to the RaCI family. Expressed in salivary glands.

It is found in the secreted. Complement inhibitor. Prevents complement-mediated C5 activation by binding to C5. Binds C5 at a different binding site than the other tick complement inhibitors OmCI and CirpT1, and the drug eculizumab. This is Complement inhibitor RaCI7 from Dermacentor andersoni (Rocky mountain wood tick).